Here is a 413-residue protein sequence, read N- to C-terminus: Putative competence-damage inducible protein (413 aa).

The protein belongs to the CinA family.

This is Putative competence-damage inducible protein from Lacticaseibacillus casei (strain BL23) (Lactobacillus casei).